Reading from the N-terminus, the 71-residue chain is MPIIKVRDNEPFDVALRRFKRSCEKAGILADVRAREFYEKPTTARKRAKAAAVKRLAKKLSRENARRVRLY.

The protein belongs to the bacterial ribosomal protein bS21 family.

This chain is Small ribosomal subunit protein bS21, found in Shewanella woodyi (strain ATCC 51908 / MS32).